Consider the following 101-residue polypeptide: Small ribosomal subunit protein uS14 (101 aa).

Belongs to the universal ribosomal protein uS14 family. Part of the 30S ribosomal subunit. Contacts proteins S3 and S10.

Functionally, binds 16S rRNA, required for the assembly of 30S particles and may also be responsible for determining the conformation of the 16S rRNA at the A site. This is Small ribosomal subunit protein uS14 from Caulobacter sp. (strain K31).